We begin with the raw amino-acid sequence, 66 residues long: Cold shock-like protein (66 aa).

In terms of domain architecture, CSD spans 3–62 (GKVKWFDSKKGYGFITKDEGGDVFVHWSAIEMEGFKTLKEGQVVEFEIQEGKKGPQAAHV).

As to quaternary structure, monomer.

Its subcellular location is the cytoplasm. The polypeptide is Cold shock-like protein (csp) (Thermotoga maritima (strain ATCC 43589 / DSM 3109 / JCM 10099 / NBRC 100826 / MSB8)).